Consider the following 420-residue polypeptide: MSNVRYISNLTRETYALILAGGRGSRLHELTDWRAKPALYFGGKFRIIDFPLSNCINSGIRRVGVVTQYKSHSLIRHVMRGWGHFKKELGESVEILPASQRYSENWYQGTADAVFQNIDIIRHELPKYVMVLSGDHVYRMDYAGLLAAHAESGADMTVSCLEVPVAEAAGAFGVMEVDDEMRILGFEEKPKHPKHSPGNPEKCLASMGNYVFNTEFLFEQLKKDAQNANSDRDFGKDIIPSIIEKHKVFAYPFKSAFPNEQAYWRDVGTLDSFWQANMELLSPTPALNLYDAKWPIWTYQEQLPPAKFVFDDDDRRGMAVDSIISGGCIISGATVRRSVLFNEVRVCSYSVVEDSVVLPDVVVLRHCKIKNAIIDRGCIIPEGTVIGYNHDHDRAKGFRVSEKGITLVTRDMLGLPVGYE.

Residues Tyr107, Gly173, 188-189, and Ser206 each bind alpha-D-glucose 1-phosphate; that span reads EK.

Belongs to the bacterial/plant glucose-1-phosphate adenylyltransferase family. In terms of assembly, homotetramer.

The enzyme catalyses alpha-D-glucose 1-phosphate + ATP + H(+) = ADP-alpha-D-glucose + diphosphate. The protein operates within glycan biosynthesis; glycogen biosynthesis. Involved in the biosynthesis of ADP-glucose, a building block required for the elongation reactions to produce glycogen. Catalyzes the reaction between ATP and alpha-D-glucose 1-phosphate (G1P) to produce pyrophosphate and ADP-Glc. This chain is Glucose-1-phosphate adenylyltransferase, found in Shewanella sp. (strain ANA-3).